We begin with the raw amino-acid sequence, 247 residues long: Probable transcriptional regulatory protein GM21_0933 (247 aa).

Belongs to the TACO1 family.

It is found in the cytoplasm. This is Probable transcriptional regulatory protein GM21_0933 from Geobacter sp. (strain M21).